Consider the following 315-residue polypeptide: 4-hydroxy-3-methylbut-2-enyl diphosphate reductase (315 aa).

Position 12 (Cys-12) interacts with [4Fe-4S] cluster. Residues His-41 and His-74 each contribute to the (2E)-4-hydroxy-3-methylbut-2-enyl diphosphate site. The dimethylallyl diphosphate site is built by His-41 and His-74. Positions 41 and 74 each coordinate isopentenyl diphosphate. Residue Cys-96 coordinates [4Fe-4S] cluster. Residue His-124 participates in (2E)-4-hydroxy-3-methylbut-2-enyl diphosphate binding. His-124 contacts dimethylallyl diphosphate. Isopentenyl diphosphate is bound at residue His-124. The Proton donor role is filled by Glu-126. Position 167 (Thr-167) interacts with (2E)-4-hydroxy-3-methylbut-2-enyl diphosphate. Cys-197 is a [4Fe-4S] cluster binding site. Ser-225, Ser-226, Asn-227, and Ser-269 together coordinate (2E)-4-hydroxy-3-methylbut-2-enyl diphosphate. 4 residues coordinate dimethylallyl diphosphate: Ser-225, Ser-226, Asn-227, and Ser-269. Isopentenyl diphosphate-binding residues include Ser-225, Ser-226, Asn-227, and Ser-269.

It belongs to the IspH family. Homodimer. Requires [4Fe-4S] cluster as cofactor.

It catalyses the reaction isopentenyl diphosphate + 2 oxidized [2Fe-2S]-[ferredoxin] + H2O = (2E)-4-hydroxy-3-methylbut-2-enyl diphosphate + 2 reduced [2Fe-2S]-[ferredoxin] + 2 H(+). It carries out the reaction dimethylallyl diphosphate + 2 oxidized [2Fe-2S]-[ferredoxin] + H2O = (2E)-4-hydroxy-3-methylbut-2-enyl diphosphate + 2 reduced [2Fe-2S]-[ferredoxin] + 2 H(+). Its pathway is isoprenoid biosynthesis; dimethylallyl diphosphate biosynthesis; dimethylallyl diphosphate from (2E)-4-hydroxy-3-methylbutenyl diphosphate: step 1/1. It participates in isoprenoid biosynthesis; isopentenyl diphosphate biosynthesis via DXP pathway; isopentenyl diphosphate from 1-deoxy-D-xylulose 5-phosphate: step 6/6. In terms of biological role, catalyzes the conversion of 1-hydroxy-2-methyl-2-(E)-butenyl 4-diphosphate (HMBPP) into a mixture of isopentenyl diphosphate (IPP) and dimethylallyl diphosphate (DMAPP). Acts in the terminal step of the DOXP/MEP pathway for isoprenoid precursor biosynthesis. The protein is 4-hydroxy-3-methylbut-2-enyl diphosphate reductase of Wigglesworthia glossinidia brevipalpis.